A 139-amino-acid polypeptide reads, in one-letter code: Putative general secretion pathway protein B (139 aa).

A helical transmembrane segment spans residues 28–48 (IIYVICLLLICLWFAGMVLVG). Positions 93-139 (VEEEDDPGVAVENAPSSSEDEENTVEESEEKAGLRERVKNALNELER) are disordered. A compositionally biased stretch (acidic residues) spans 110–121 (SEDEENTVEESE). Positions 122–139 (EKAGLRERVKNALNELER) are enriched in basic and acidic residues.

It is found in the cell membrane. Its function is as follows. Part of a cryptic operon that encodes proteins involved in type II secretion pathway in other organisms, but is not expressed in strain K12 under standard laboratory conditions. May play a regulatory role under conditions of derepressed gsp gene expression. The polypeptide is Putative general secretion pathway protein B (Escherichia coli (strain K12)).